Here is a 282-residue protein sequence, read N- to C-terminus: Acetylglutamate kinase (282 aa).

Substrate contacts are provided by residues 62–63, Arg-84, and Asn-178; that span reads GG.

Belongs to the acetylglutamate kinase family. ArgB subfamily.

It localises to the cytoplasm. It carries out the reaction N-acetyl-L-glutamate + ATP = N-acetyl-L-glutamyl 5-phosphate + ADP. It functions in the pathway amino-acid biosynthesis; L-arginine biosynthesis; N(2)-acetyl-L-ornithine from L-glutamate: step 2/4. Functionally, catalyzes the ATP-dependent phosphorylation of N-acetyl-L-glutamate. In Thermotoga neapolitana (strain ATCC 49049 / DSM 4359 / NBRC 107923 / NS-E), this protein is Acetylglutamate kinase.